We begin with the raw amino-acid sequence, 238 residues long: uncharacterized protein (238 aa).

Transmembrane regions (helical) follow at residues 6–26, 45–65, 98–118, 160–180, and 186–206; these read METLIRLFVSILIICVLALMI, FILLYFCGFKYLILLLSFFIL, IPILFAILAIFGFNWALIGYI, IFGTLAGVLGAFLIGLFGYLL, and IVLCGTAGGIAGNLADSLVGA.

Belongs to the TMEM19 family.

It localises to the cell membrane. This is an uncharacterized protein from Methanocaldococcus jannaschii (strain ATCC 43067 / DSM 2661 / JAL-1 / JCM 10045 / NBRC 100440) (Methanococcus jannaschii).